Reading from the N-terminus, the 636-residue chain is Chaperone protein HtpG (636 aa).

Residues M1–R345 form an a; substrate-binding region. The b stretch occupies residues E346–R562. The interval L563–K636 is c.

The protein belongs to the heat shock protein 90 family. As to quaternary structure, homodimer.

Its subcellular location is the cytoplasm. Functionally, molecular chaperone. Has ATPase activity. This Dechloromonas aromatica (strain RCB) protein is Chaperone protein HtpG.